The chain runs to 150 residues: Large ribosomal subunit protein uL13 (150 aa).

Positions 129–150 (TEHPHAAQKPQPLQLNPSASAQ) are disordered. Residues 139 to 150 (QPLQLNPSASAQ) show a composition bias toward polar residues.

Belongs to the universal ribosomal protein uL13 family. Part of the 50S ribosomal subunit.

In terms of biological role, this protein is one of the early assembly proteins of the 50S ribosomal subunit, although it is not seen to bind rRNA by itself. It is important during the early stages of 50S assembly. The polypeptide is Large ribosomal subunit protein uL13 (Synechococcus sp. (strain CC9605)).